Consider the following 174-residue polypeptide: Cuticle protein 1 (174 aa).

The first 18 residues, 1 to 18 (MRFLIAFVAILGYASASA), serve as a signal peptide directing secretion.

It is found in the secreted. The protein is Cuticle protein 1 of Lonomia obliqua (Moth).